Reading from the N-terminus, the 341-residue chain is uncharacterized protein (341 aa).

Belongs to the cycloisomerase 2 family.

This is an uncharacterized protein from Lactococcus lactis subsp. lactis (strain IL1403) (Streptococcus lactis).